We begin with the raw amino-acid sequence, 184 residues long: 3-hydroxyanthranilate 3,4-dioxygenase (184 aa).

Arg-44 is an O2 binding site. Residues His-48, Glu-54, and His-92 each contribute to the Fe cation site. Residue Glu-54 participates in substrate binding. The substrate site is built by Arg-96 and Glu-106. Cys-121, Cys-126, Cys-162, and Cys-165 together coordinate a divalent metal cation.

Belongs to the 3-HAO family. It depends on Fe(2+) as a cofactor.

The protein resides in the cytoplasm. It carries out the reaction 3-hydroxyanthranilate + O2 = (2Z,4Z)-2-amino-3-carboxymuconate 6-semialdehyde. It functions in the pathway cofactor biosynthesis; NAD(+) biosynthesis; quinolinate from L-kynurenine: step 3/3. Functionally, catalyzes the oxidative ring opening of 3-hydroxyanthranilate to 2-amino-3-carboxymuconate semialdehyde, which spontaneously cyclizes to quinolinate. In Pyricularia oryzae (strain 70-15 / ATCC MYA-4617 / FGSC 8958) (Rice blast fungus), this protein is 3-hydroxyanthranilate 3,4-dioxygenase.